Consider the following 499-residue polypeptide: Probable cytosol aminopeptidase (499 aa).

Positions 271 and 276 each coordinate Mn(2+). Residue Lys-283 is part of the active site. Residues Asp-294, Asp-353, and Glu-355 each contribute to the Mn(2+) site. Arg-357 is an active-site residue.

The protein belongs to the peptidase M17 family. Requires Mn(2+) as cofactor.

It localises to the cytoplasm. It carries out the reaction Release of an N-terminal amino acid, Xaa-|-Yaa-, in which Xaa is preferably Leu, but may be other amino acids including Pro although not Arg or Lys, and Yaa may be Pro. Amino acid amides and methyl esters are also readily hydrolyzed, but rates on arylamides are exceedingly low.. The enzyme catalyses Release of an N-terminal amino acid, preferentially leucine, but not glutamic or aspartic acids.. Its function is as follows. Presumably involved in the processing and regular turnover of intracellular proteins. Catalyzes the removal of unsubstituted N-terminal amino acids from various peptides. The polypeptide is Probable cytosol aminopeptidase (Bordetella bronchiseptica (strain ATCC BAA-588 / NCTC 13252 / RB50) (Alcaligenes bronchisepticus)).